A 212-amino-acid chain; its full sequence is Small ribosomal subunit protein eS6 (212 aa).

This sequence belongs to the eukaryotic ribosomal protein eS6 family.

This Metallosphaera sedula (strain ATCC 51363 / DSM 5348 / JCM 9185 / NBRC 15509 / TH2) protein is Small ribosomal subunit protein eS6.